A 753-amino-acid polypeptide reads, in one-letter code: Translation initiation factor IF-2 (753 aa).

The interval 1–166 (MSEKPRRDTG…PVMRPRGPVA (166 aa)) is disordered. Low complexity-rich tracts occupy residues 19-43 (STGQ…ATGA), 71-81 (NARPAAPANAR), and 102-122 (TPAP…TNTR). Over residues 133–146 (PQPEEREREREAVL) the composition is skewed to basic and acidic residues. Residues 153–162 (TTTRPVMRPR) are compositionally biased toward low complexity. Positions 249-418 (PRPPVVTIMG…LLVADLEDLR (170 aa)) constitute a tr-type G domain. Residues 258–265 (GHVDHGKT) form a G1 region. 258 to 265 (GHVDHGKT) lines the GTP pocket. The segment at 283-287 (GITQH) is G2. The interval 304–307 (DTPG) is G3. GTP-binding positions include 304–308 (DTPGH) and 358–361 (NKID). Positions 358 to 361 (NKID) are G4. The G5 stretch occupies residues 394–396 (SAR).

Belongs to the TRAFAC class translation factor GTPase superfamily. Classic translation factor GTPase family. IF-2 subfamily.

The protein localises to the cytoplasm. Its function is as follows. One of the essential components for the initiation of protein synthesis. Protects formylmethionyl-tRNA from spontaneous hydrolysis and promotes its binding to the 30S ribosomal subunits. Also involved in the hydrolysis of GTP during the formation of the 70S ribosomal complex. The sequence is that of Translation initiation factor IF-2 from Chloroflexus aggregans (strain MD-66 / DSM 9485).